Consider the following 461-residue polypeptide: Cysteine--tRNA ligase (461 aa).

Zn(2+) is bound at residue Cys-30. The short motif at 32–42 (VTVYDLCHIGH) is the 'HIGH' region element. Zn(2+) is bound by residues Cys-211, His-236, and Glu-240. The short motif at 268–272 (KMSKS) is the 'KMSKS' region element. Lys-271 is an ATP binding site.

It belongs to the class-I aminoacyl-tRNA synthetase family. Monomer. Requires Zn(2+) as cofactor.

It is found in the cytoplasm. The catalysed reaction is tRNA(Cys) + L-cysteine + ATP = L-cysteinyl-tRNA(Cys) + AMP + diphosphate. The polypeptide is Cysteine--tRNA ligase (Shewanella sp. (strain MR-7)).